The chain runs to 290 residues: GTPase Era (290 aa).

The Era-type G domain occupies 2-169 (KSGFVSIIGR…KDKIYENLNE (168 aa)). The interval 10–17 (GRPSTGKS) is G1. 10–17 (GRPSTGKS) contributes to the GTP binding site. Positions 36-40 (QTTRN) are G2. Residues 57–60 (DTPG) are G3. GTP-binding positions include 57–61 (DTPGF) and 119–122 (NKID). Residues 119-122 (NKID) form a G4 region. Residues 148 to 150 (ISA) are G5. The 77-residue stretch at 200–276 (LKEELPYSIY…NLFLQVKLRK (77 aa)) folds into the KH type-2 domain.

The protein belongs to the TRAFAC class TrmE-Era-EngA-EngB-Septin-like GTPase superfamily. Era GTPase family. In terms of assembly, monomer.

The protein resides in the cytoplasm. It localises to the cell inner membrane. Functionally, an essential GTPase that binds both GDP and GTP, with rapid nucleotide exchange. Plays a role in 16S rRNA processing and 30S ribosomal subunit biogenesis and possibly also in cell cycle regulation and energy metabolism. The protein is GTPase Era of Borrelia duttonii (strain Ly).